A 130-amino-acid polypeptide reads, in one-letter code: MNSKIIEAFFIVALFTTSCLAQAPAPSPTTTVTPPPVATPPPAATPAPTTTPPPAVSPAPTSSPPSSAPSPSSDAPTASPPAPEGPGVSPGELAPTPSDASAPPPNAALTNKAFVVGSLVAAIIYAVVLA.

The N-terminal stretch at 1–21 (MNSKIIEAFFIVALFTTSCLA) is a signal peptide. At Gln-22 the chain carries Pyrrolidone carboxylic acid. A disordered region spans residues 22–108 (QAPAPSPTTT…DASAPPPNAA (87 aa)). 5 positions are modified to 4-hydroxyproline: Pro-24, Pro-26, Pro-28, Pro-35, and Pro-36. O-linked (Ara...) hydroxyproline glycans are attached at residues Pro-24, Pro-26, Pro-28, Pro-35, and Pro-36. Positions 33-68 (TPPPVATPPPAATPAPTTTPPPAVSPAPTSSPPSSA) are enriched in pro residues. A lipid anchor (GPI-anchor amidated asparagine) is attached at Asn-106. Positions 107 to 130 (AALTNKAFVVGSLVAAIIYAVVLA) are cleaved as a propeptide — removed in mature form.

It belongs to the classical AGP family. In terms of processing, O-glycosylated on hydroxyprolines; noncontiguous hydroxylproline residues are glycosylated with arabinogalactan.

It localises to the cell membrane. Proteoglycan that seems to be implicated in diverse developmental roles such as differentiation, cell-cell recognition, embryogenesis and programmed cell death. The polypeptide is Classical arabinogalactan protein 7 (AGP7) (Arabidopsis thaliana (Mouse-ear cress)).